Consider the following 547-residue polypeptide: Probable protein kinase UbiB (547 aa).

A Protein kinase domain is found at 121–501 (EFSPDPMASA…QLRSERRWRR (381 aa)). ATP is bound by residues 127-135 (MASASVAQV) and lysine 149. Aspartate 284 functions as the Proton acceptor in the catalytic mechanism. A run of 2 helical transmembrane segments spans residues 502–522 (GFIALVLAGAALVGSQPHAGQ) and 523–543 (WLADLPVWSWALLAGAAGVML).

It belongs to the ABC1 family. UbiB subfamily.

The protein resides in the cell inner membrane. Its pathway is cofactor biosynthesis; ubiquinone biosynthesis [regulation]. Is probably a protein kinase regulator of UbiI activity which is involved in aerobic coenzyme Q (ubiquinone) biosynthesis. The polypeptide is Probable protein kinase UbiB (Marinobacter nauticus (strain ATCC 700491 / DSM 11845 / VT8) (Marinobacter aquaeolei)).